The chain runs to 540 residues: Upstream-binding protein 1 (540 aa).

Position 22 is a phosphoserine (Ser-22). A Grh/CP2 DB domain is found at 60-296; the sequence is EHPPFQYVMC…EQKKSSKRTL (237 aa). Disordered stretches follow at residues 236 to 270 and 285 to 368; these read KPKG…DTTI and EHEQ…QPSA. Positions 238-262 are enriched in basic and acidic residues; sequence KGADRKQKTDREKMEKRTAHEKEKY. Residues 320–368 are compositionally biased toward polar residues; the sequence is YVNNSPSPAPTFTSPQQSTCSVPDSNSSSPNHQGDGASQTSGEQIQPSA. Phosphoserine is present on residues Ser-390 and Ser-393.

The protein belongs to the grh/CP2 family. CP2 subfamily. As to quaternary structure, interacts with TFCP2. Interacts with PIAS1, and is probably part of a complex containing TFCP2, UBP1 and PIAS1. Expressed in adrenal tissue, JEG-3, NCI-H295A, Hep-G2 and HeLa cell lines.

It localises to the nucleus. In terms of biological role, functions as a transcriptional activator in a promoter context-dependent manner. Modulates the placental expression of CYP11A1. Involved in regulation of the alpha-globin gene in erythroid cells. Activation of the alpha-globin promoter in erythroid cells is via synergistic interaction with TFCP2. Involved in regulation of the alpha-globin gene in erythroid cells. Binds strongly to sequences around the HIV-1 initiation site and weakly over the TATA-box. Represses HIV-1 transcription by inhibiting the binding of TFIID to the TATA-box. The polypeptide is Upstream-binding protein 1 (UBP1) (Homo sapiens (Human)).